Here is a 218-residue protein sequence, read N- to C-terminus: Serine/threonine-protein phosphatase 2 (218 aa).

The Mn(2+) site is built by D22, H24, D51, and N77. H78 serves as the catalytic Proton donor. H187 provides a ligand contact to Mn(2+).

Belongs to the PPP phosphatase family. PP-1 subfamily. Mn(2+) is required as a cofactor.

It carries out the reaction O-phospho-L-seryl-[protein] + H2O = L-seryl-[protein] + phosphate. The enzyme catalyses O-phospho-L-threonyl-[protein] + H2O = L-threonyl-[protein] + phosphate. Inhibited by cadmium, copper, zinc when added activity but with less efficiency. Functionally, can hydrolyze phosphorylated Ser-, Thr- or Tyr-substrates in vitro. The natural substrate is unknown. The sequence is that of Serine/threonine-protein phosphatase 2 (pphB) from Salmonella typhimurium (strain LT2 / SGSC1412 / ATCC 700720).